Here is a 150-residue protein sequence, read N- to C-terminus: Large ribosomal subunit protein bL9 (150 aa).

It belongs to the bacterial ribosomal protein bL9 family.

Binds to the 23S rRNA. The chain is Large ribosomal subunit protein bL9 from Shewanella frigidimarina (strain NCIMB 400).